The following is a 324-amino-acid chain: Methenyltetrahydromethanopterin cyclohydrolase (324 aa).

The protein belongs to the MCH family.

The protein resides in the cytoplasm. It carries out the reaction 5,10-methenyl-5,6,7,8-tetrahydromethanopterin + H2O = N(5)-formyl-5,6,7,8-tetrahydromethanopterin + H(+). The protein operates within one-carbon metabolism; formaldehyde degradation; formate from formaldehyde (H(4)MPT route): step 3/5. Functionally, catalyzes the hydrolysis of methenyl-H(4)MPT(+) to 5-formyl-H(4)MPT. This chain is Methenyltetrahydromethanopterin cyclohydrolase, found in Methylobacterium sp. (strain 4-46).